We begin with the raw amino-acid sequence, 246 residues long: tRNA (guanine-N(7)-)-methyltransferase (246 aa).

Positions 77, 102, 129, and 152 each coordinate S-adenosyl-L-methionine. The active site involves aspartate 152. Substrate is bound by residues lysine 156, aspartate 188, and 225–228; that span reads TKFE.

Belongs to the class I-like SAM-binding methyltransferase superfamily. TrmB family.

It carries out the reaction guanosine(46) in tRNA + S-adenosyl-L-methionine = N(7)-methylguanosine(46) in tRNA + S-adenosyl-L-homocysteine. It functions in the pathway tRNA modification; N(7)-methylguanine-tRNA biosynthesis. In terms of biological role, catalyzes the formation of N(7)-methylguanine at position 46 (m7G46) in tRNA. The sequence is that of tRNA (guanine-N(7)-)-methyltransferase from Haemophilus influenzae (strain 86-028NP).